The sequence spans 500 residues: Na(+)/H(+) antiporter NhaB (500 aa).

The next 12 helical transmembrane spans lie at 34 to 54, 58 to 78, 96 to 116, 129 to 149, 150 to 170, 205 to 225, 241 to 261, 311 to 331, 350 to 370, 394 to 414, 450 to 470, and 477 to 497; these read LLLATLGPVVTGWVLVIQFIF, MALKCYPLMPGGLLLVEALLL, VILLLMFMVAGIHFMKELLLF, AVLSLLFCVLSAFLSAFLDAL, TVTAVIISAAVGFYAVYHRVA, LLMHGAVGTALGGVCTLVGEP, FFLKVAPVSMPVLAAGLVTCV, ILIVCLGLHIAEVGLIGLMVI, FQDAMPFTALLVVFFAVVAVI, MLYLANGLLSAISDNVFVATI, ATPNGQAAFLFLLTSAIAPLI, and MVWMALPYTVVMGGLGWWAVT.

It belongs to the NhaB Na(+)/H(+) (TC 2.A.34) antiporter family.

Its subcellular location is the cell inner membrane. It catalyses the reaction 2 Na(+)(in) + 3 H(+)(out) = 2 Na(+)(out) + 3 H(+)(in). Its function is as follows. Na(+)/H(+) antiporter that extrudes sodium in exchange for external protons. In Pseudomonas entomophila (strain L48), this protein is Na(+)/H(+) antiporter NhaB.